The primary structure comprises 771 residues: MDVVKKFAVMSVTVVAGPVLTLSSPVVVTFGTSLIAVSLVKRLLQEQPRVIAHDHEHYPGGSESSSSSCATAPILRNLSRDQCDSENIGCSSSACSPSEIVKVTRQVVEVERGLYRDKQQFGMDVVKKFAVMSVTVVAGPVLTLSSPVVVTFGTSLIAVSLVKRLLQEQPRVIAHDHEHYPGGSESSSSSCATAPILRNLSRDQCDSENIGCSSSACSPSEIVKVTRQVVEVERGLYRDIFQDNEIPSVMEEKLQKLLYSEGEKIRRRCQFEASTMHSRKVKVPEVGTIPDIQTWFDATFPGNSVRFSDFDGYTVATEDINMDVQDCRLKFGKTFRPYEFKESLKPVLRTAMPEKRQGSLIESVLAFRKRNLAAPRLQGALNEWHTIENVLKKALKVFFFEDLIDRTDHCTYESALRWWDKQSVTARAQLVADQRRLCDVDFTTYNFMIKNDVKPKLDLTPQVEYAALQTVVYPDKIVNAFFGPIIKEINERIIRALRPHVVFNSRMTADELNETVAFLTPHKYRALEIDFSKFDKSKTGLHIKAVIGLYKLFGLDGLLKVLWEKSQYQTYVKDRNFGLEAYLLYQQKSGNCDTYGSNTWSAALALLDCLPLEDAHFCVFGGDDSLILFDQGYIISDPCRQLAGTWNLECKVFDFKYPAFCGKFLLCIDGKYQFVPDAAKFITKLGRTDVRDVEVLSEIYISINDNYKSYKDFKVLDALDKALVDRYRSPYSAISALVSLCYHIFDFNKFKLLFNCEGKFVDKKLRKDFEW.

The region spanning 524–637 (YRALEIDFSK…LFDQGYIISD (114 aa)) is the RdRp catalytic domain.

Belongs to the ssRNA positive-strand viruses RNA-directed RNA polymerase family.

Its subcellular location is the host chloroplast envelope. The catalysed reaction is RNA(n) + a ribonucleoside 5'-triphosphate = RNA(n+1) + diphosphate. Functionally, RNA-directed RNA polymerase plays an essential role in the virus replication. This chain is RNA-directed RNA polymerase, found in Hordeum vulgare (Barley).